The chain runs to 334 residues: H-2 class I histocompatibility antigen, Q7 alpha chain (334 aa).

An N-terminal signal peptide occupies residues 1–21 (MALTMLLLLVAAALTLIETRA). Residues 22 to 111 (GQHSLQYFHT…AQSYYNQSKG (90 aa)) form an alpha-1 region. Topologically, residues 22 to 310 (GQHSLQYFHT…PPYTVSNMAT (289 aa)) are extracellular. Asn107 carries an N-linked (GlcNAc...) asparagine glycan. The tract at residues 112–203 (GSHTLQWMYG…QLGKETLLRT (92 aa)) is alpha-2. Disulfide bonds link Cys122–Cys185 and Cys224–Cys280. The interval 204-295 (DPPKAHVTHH…GLPEPLTLRW (92 aa)) is alpha-3. The Ig-like C1-type domain maps to 206 to 294 (PKAHVTHHPR…EGLPEPLTLR (89 aa)). A glycan (N-linked (GlcNAc...) asparagine) is linked at Asn277. Positions 296–310 (GRWEPPPYTVSNMAT) are connecting peptide. A helical membrane pass occupies residues 311–332 (IAVVVDLGAVAIIGAVVAFVMN).

Belongs to the MHC class I family. In terms of assembly, heterodimer of an alpha chain and a beta chain (beta-2-microglobulin).

Its subcellular location is the membrane. Functionally, involved in the presentation of foreign antigens to the immune system. The protein is H-2 class I histocompatibility antigen, Q7 alpha chain (H2-Q7) of Mus musculus (Mouse).